Consider the following 625-residue polypeptide: Very-long-chain aldehyde decarbonylase CER1 (625 aa).

Helical transmembrane passes span 45 to 65 (LGYF…QVWI), 126 to 146 (GVLM…YWLH), 177 to 197 (PFAE…TTLL), 200 to 220 (TASI…NNMG), and 329 to 349 (LLWP…RLFV). In terms of domain architecture, Fatty acid hydroxylase spans 138–272 (VEFLYYWLHK…MPLYDYIYGT (135 aa)).

This sequence belongs to the sterol desaturase family. As to quaternary structure, homodimer. Interacts with CER3, CYTB5-B, CYTB5-C, CYTB5-D and CYTB5-E. As to expression, expressed in seedlings, stems, leaves, flowers, fruits and siliques. Not detected in roots, pollen and seeds. Expressed in trichomes, cotyledons, shoot apical meristem and leaf primordia. Preferentially associated with young leaves rather than mature leaves. Expressed in the epidermis of the stem and caulines leaves, in the carpels and the sepals.

The protein resides in the endoplasmic reticulum membrane. The enzyme catalyses a long-chain fatty aldehyde + 2 NADPH + O2 + H(+) = a long-chain alkane + formate + 2 NADP(+) + H2O. Its function is as follows. Aldehyde decarbonylase involved in the conversion of aldehydes to alkanes. Core component of a very-long-chain alkane synthesis complex. Involved in epicuticular wax biosynthesis and pollen fertility. The protein is Very-long-chain aldehyde decarbonylase CER1 (CER1) of Arabidopsis thaliana (Mouse-ear cress).